Here is a 333-residue protein sequence, read N- to C-terminus: 5-formaminoimidazole-4-carboxamide-1-(beta)-D-ribofuranosyl 5'-monophosphate synthetase (333 aa).

5-amino-1-(5-phospho-beta-D-ribosyl)imidazole-4-carboxamide-binding residues include His-9 and Ser-73. The region spanning 94–324 is the ATP-grasp domain; it reads RNLFEWEANQ…ISREIKLAIN (231 aa). Residues 124-184 and Glu-206 contribute to the ATP site; that span reads PEDI…VPMY. Residue Asn-230 participates in 5-amino-1-(5-phospho-beta-D-ribosyl)imidazole-4-carboxamide binding. Glu-269 and Glu-282 together coordinate Mg(2+).

The protein belongs to the phosphohexose mutase family. The cofactor is Mg(2+). Mn(2+) is required as a cofactor.

It carries out the reaction 5-amino-1-(5-phospho-beta-D-ribosyl)imidazole-4-carboxamide + formate + ATP = 5-formamido-1-(5-phospho-D-ribosyl)imidazole-4-carboxamide + ADP + phosphate. It functions in the pathway purine metabolism; IMP biosynthesis via de novo pathway; 5-formamido-1-(5-phospho-D-ribosyl)imidazole-4-carboxamide from 5-amino-1-(5-phospho-D-ribosyl)imidazole-4-carboxamide (formate route): step 1/1. In terms of biological role, catalyzes the ATP- and formate-dependent formylation of 5-aminoimidazole-4-carboxamide-1-beta-d-ribofuranosyl 5'-monophosphate (AICAR) to 5-formaminoimidazole-4-carboxamide-1-beta-d-ribofuranosyl 5'-monophosphate (FAICAR) in the absence of folates. This Sulfurisphaera tokodaii (strain DSM 16993 / JCM 10545 / NBRC 100140 / 7) (Sulfolobus tokodaii) protein is 5-formaminoimidazole-4-carboxamide-1-(beta)-D-ribofuranosyl 5'-monophosphate synthetase.